A 314-amino-acid polypeptide reads, in one-letter code: Homeobox protein knotted-1-like 3 (314 aa).

The ELK domain maps to 218 to 238 (ELKIELKQGFKSRIEDVREEI). The segment at residues 239–302 (LRKRRAGKLP…NQRKRNWHNN (64 aa)) is a DNA-binding region (homeobox; TALE-type).

It belongs to the TALE/KNOX homeobox family. Isoform 1 is expressed in roots and flowers, and at lower levels in leaf blades and leaf sheaths. Isoform 2 is expressed in roots and flowers.

Its subcellular location is the nucleus. This Oryza sativa subsp. japonica (Rice) protein is Homeobox protein knotted-1-like 3 (HOS66).